The following is a 165-amino-acid chain: Small ribosomal subunit protein eS10 (165 aa).

Tyrosine 12 is subject to Phosphotyrosine. The segment at 90-165 is disordered; it reads VPATLRRSRP…FGRGRGQPPQ (76 aa). A compositionally biased stretch (basic and acidic residues) spans 97-128; it reads SRPETGRPRPKGPEGERPARFTRGEADRDTYR. Residues lysine 138 and lysine 139 each participate in a glycyl lysine isopeptide (Lys-Gly) (interchain with G-Cter in ubiquitin) cross-link. Position 146 is a phosphoserine (serine 146). An Omega-N-methylarginine modification is found at arginine 153. Gly residues predominate over residues 154–165; sequence GGFGRGRGQPPQ. Arginine 158 and arginine 160 each carry symmetric dimethylarginine.

The protein belongs to the eukaryotic ribosomal protein eS10 family. Component of the small ribosomal subunit. The methylated form interacts with NPM1. Methylated by PRMT5. Methylation is necessary for its interaction with NPS1, its localization in the granular component (GC) region of the nucleolus, for the proper assembly of ribosomes, protein synthesis and optimal cell proliferation. Post-translationally, monoubiquitinated by ZNF598 when a ribosome has stalled during translation of poly(A) sequences, leading to preclude synthesis of a long poly-lysine tail and initiate the ribosome quality control (RQC) pathway to degrade the potentially detrimental aberrant nascent polypeptide. Deubiquitinated by OTUD3 and USP21, antagonizing ZNF598 activity. Deubiquitinated by OTUD1, antagonizing ZNF598 activity and stimulating formation of polysomes: deubiquitination by OTUD1 promotes stability and translation of a subset mRNAs with a high abundance of rare codons can limit the translation rate. Deubiquitinated by USP10.

The protein resides in the cytoplasm. Its subcellular location is the nucleus. The protein localises to the nucleolus. Functionally, component of the 40S ribosomal subunit. The ribosome is a large ribonucleoprotein complex responsible for the synthesis of proteins in the cell. In Rattus norvegicus (Rat), this protein is Small ribosomal subunit protein eS10 (Rps10).